Consider the following 202-residue polypeptide: dTTP/UTP pyrophosphatase (202 aa).

Aspartate 76 functions as the Proton acceptor in the catalytic mechanism.

The protein belongs to the Maf family. YhdE subfamily. A divalent metal cation serves as cofactor.

The protein localises to the cytoplasm. The enzyme catalyses dTTP + H2O = dTMP + diphosphate + H(+). It catalyses the reaction UTP + H2O = UMP + diphosphate + H(+). Nucleoside triphosphate pyrophosphatase that hydrolyzes dTTP and UTP. May have a dual role in cell division arrest and in preventing the incorporation of modified nucleotides into cellular nucleic acids. This Neisseria gonorrhoeae (strain ATCC 700825 / FA 1090) protein is dTTP/UTP pyrophosphatase.